Here is a 58-residue protein sequence, read N- to C-terminus: uncharacterized protein (58 aa).

Residues 5–27 form a helical membrane-spanning segment; that stretch reads FLHANITIIPHSVLYVSLSYYII.

It localises to the membrane. This is an uncharacterized protein from Saccharomyces cerevisiae (strain ATCC 204508 / S288c) (Baker's yeast).